The chain runs to 480 residues: Aspartyl/glutamyl-tRNA(Asn/Gln) amidotransferase subunit B (480 aa).

This sequence belongs to the GatB/GatE family. GatB subfamily. Heterotrimer of A, B and C subunits.

The catalysed reaction is L-glutamyl-tRNA(Gln) + L-glutamine + ATP + H2O = L-glutaminyl-tRNA(Gln) + L-glutamate + ADP + phosphate + H(+). It catalyses the reaction L-aspartyl-tRNA(Asn) + L-glutamine + ATP + H2O = L-asparaginyl-tRNA(Asn) + L-glutamate + ADP + phosphate + 2 H(+). In terms of biological role, allows the formation of correctly charged Asn-tRNA(Asn) or Gln-tRNA(Gln) through the transamidation of misacylated Asp-tRNA(Asn) or Glu-tRNA(Gln) in organisms which lack either or both of asparaginyl-tRNA or glutaminyl-tRNA synthetases. The reaction takes place in the presence of glutamine and ATP through an activated phospho-Asp-tRNA(Asn) or phospho-Glu-tRNA(Gln). This chain is Aspartyl/glutamyl-tRNA(Asn/Gln) amidotransferase subunit B, found in Streptococcus agalactiae serotype Ia (strain ATCC 27591 / A909 / CDC SS700).